Here is a 118-residue protein sequence, read N- to C-terminus: DNA-binding protein inhibitor ID-3-A (118 aa).

The region spanning 32–84 (SHKGPGMDEPMGLLYDMNGCYSKLKELVPGIPQGSKLSQVEILQHVIDYIFDL) is the bHLH domain.

In terms of assembly, homodimer. Heterodimer with other HLH proteins. Interacts (via HLH domain) with the bHLH protein hes4/hairy2 (via Orange domain). Interacts with stat3. As to expression, at gastrula stage, expressed in all three germ layers, but becomes localized to discrete domains of the developing nervous system during neurulation, including the anterior neural plate, cement gland, eye anlagen, otic placode and both cranial and trunk premigratory and early migratory neural crest cells. Also expressed in the most dorsal and ventral portions of the myotome, the developing heart and anterior blood islets, and in the tail fin mesenchyme. Expressed at a low level in limbs, with expression decreasing as limbs develop, but expressed at a high level in blastemas (regenerated limbs), where expression is localized to both the blastermal epidermis and mesenchyme. Widely expressed in adults including the liver and heart.

It localises to the nucleus. Its function is as follows. Transcriptional regulator (lacking a basic DNA binding domain) which negatively regulates the basic helix-loop-helix (bHLH) transcription factors by forming heterodimers and inhibiting their DNA binding and transcriptional activity. Influences cell fate decisions in the embryo by sequestering and blocking the activity of the bHLH transcription factors that control these decisions. Inhibits the binding of myogenic bHLH-containing complexes to E-box DNA, thereby preventing activation of muscle-specific target genes. Also inhibits the activity of neurogenic factor neurod1/neuroD. Plays a role in cell cycle progression and survival of neural crest progenitors; binding to either hes4-B/hairy2b or stat3 blocks the formation of transcription factor complexes and the repressor function of hes4-B/hairy2B, to allow neural crest progenitors to differentiate. May play a role in the regulation of the circadian rhythm. The polypeptide is DNA-binding protein inhibitor ID-3-A (id3-a) (Xenopus laevis (African clawed frog)).